The sequence spans 255 residues: Uracil-DNA glycosylase (255 aa).

Catalysis depends on Asp-93, which acts as the Proton acceptor.

Belongs to the uracil-DNA glycosylase (UDG) superfamily. UNG family.

The protein localises to the host nucleus. The catalysed reaction is Hydrolyzes single-stranded DNA or mismatched double-stranded DNA and polynucleotides, releasing free uracil.. Excises uracil residues from the DNA which can arise as a result of misincorporation of dUMP residues by DNA polymerase or deamination of cytosines. Therefore may reduce deleterious uracil incorporation into the viral genome, particularly in terminally differentiated cells which lack DNA repair enzymes. The polypeptide is Uracil-DNA glycosylase (U81) (Human herpesvirus 6A (strain Uganda-1102) (HHV-6 variant A)).